A 61-amino-acid chain; its full sequence is Small ribosomal subunit protein uS14B (61 aa).

The Zn(2+) site is built by C24, C27, C40, and C43.

Belongs to the universal ribosomal protein uS14 family. Zinc-binding uS14 subfamily. In terms of assembly, part of the 30S ribosomal subunit. Contacts proteins S3 and S10. The cofactor is Zn(2+).

In terms of biological role, binds 16S rRNA, required for the assembly of 30S particles and may also be responsible for determining the conformation of the 16S rRNA at the A site. The polypeptide is Small ribosomal subunit protein uS14B (Limosilactobacillus reuteri (strain DSM 20016) (Lactobacillus reuteri)).